Reading from the N-terminus, the 343-residue chain is MNERSPPRRPATFRLDDPGVVVTEADETARLGRGTIQITPEHDPATLPVPIEAVLPARRGLPWGALFWSGLAGLTLLGVGLGVVHLIEDLFARSESLGFVGLAFAFVTALALAVVIGREAYGLARLATIEKLHQRAAAVLASDDRKESRVIVQDLLKIAHQNPQLARARATLESHTGEIIDGADMIRLAERELMSPLDAEARRLVSSAAQKVSIVTAVSPRAAIDVMFVFVAALRLIRQLAYLYGGRPGALGMIRLLRHVIAHLAITGGMAASDSLVQQMLGHGIAAKLSQRLGEGVLNGLLTARLGLAAIEVTRPLPFAALPPPKLSDLATDLLRKKEDEEE.

The next 3 helical transmembrane spans lie at 64–84 (GALF…LGVV), 97–117 (LGFV…VVIG), and 214–234 (IVTA…VAAL).

It belongs to the UPF0283 family.

The protein resides in the cell inner membrane. This chain is UPF0283 membrane protein blr7254, found in Bradyrhizobium diazoefficiens (strain JCM 10833 / BCRC 13528 / IAM 13628 / NBRC 14792 / USDA 110).